We begin with the raw amino-acid sequence, 396 residues long: Elongation factor Tu (396 aa).

One can recognise a tr-type G domain in the interval 10-206 (KPHVNVGTIG…ALDSYIPEPE (197 aa)). Positions 19-26 (GHVDHGKT) are G1. 19 to 26 (GHVDHGKT) is a binding site for GTP. Position 26 (threonine 26) interacts with Mg(2+). The interval 60–64 (GITIN) is G2. The G3 stretch occupies residues 81–84 (DCPG). Residues 81–85 (DCPGH) and 136–139 (NKCD) contribute to the GTP site. Residues 136–139 (NKCD) form a G4 region. Residues 174–176 (SAL) are G5.

It belongs to the TRAFAC class translation factor GTPase superfamily. Classic translation factor GTPase family. EF-Tu/EF-1A subfamily. As to quaternary structure, monomer.

The protein localises to the cytoplasm. It catalyses the reaction GTP + H2O = GDP + phosphate + H(+). In terms of biological role, GTP hydrolase that promotes the GTP-dependent binding of aminoacyl-tRNA to the A-site of ribosomes during protein biosynthesis. In Acinetobacter baumannii (strain ATCC 17978 / DSM 105126 / CIP 53.77 / LMG 1025 / NCDC KC755 / 5377), this protein is Elongation factor Tu.